The primary structure comprises 502 residues: Basic immunoglobulin-like variable motif-containing protein (502 aa).

2 disordered regions span residues 1–32 and 438–460; these read MPNATEAGKATDPGHGEHTSENKSPEEGLQGA and SQHPTHVPGIAKSESEDNISKKQ. Positions 12-26 are enriched in basic and acidic residues; that stretch reads DPGHGEHTSENKSPE.

It belongs to the BIVM family.

It localises to the cytoplasm. The protein resides in the nucleus. This chain is Basic immunoglobulin-like variable motif-containing protein (Bivm), found in Mus musculus (Mouse).